Reading from the N-terminus, the 290-residue chain is ATP synthase gamma chain (290 aa).

The protein belongs to the ATPase gamma chain family. As to quaternary structure, F-type ATPases have 2 components, CF(1) - the catalytic core - and CF(0) - the membrane proton channel. CF(1) has five subunits: alpha(3), beta(3), gamma(1), delta(1), epsilon(1). CF(0) has three main subunits: a, b and c.

It localises to the cell membrane. In terms of biological role, produces ATP from ADP in the presence of a proton gradient across the membrane. The gamma chain is believed to be important in regulating ATPase activity and the flow of protons through the CF(0) complex. This is ATP synthase gamma chain from Buchnera aphidicola subsp. Schlechtendalia chinensis.